The primary structure comprises 471 residues: Glutamyl-tRNA(Gln) amidotransferase subunit A (471 aa).

Active-site charge relay system residues include Lys-66 and Ser-141. Ser-165 (acyl-ester intermediate) is an active-site residue.

Belongs to the amidase family. GatA subfamily. In terms of assembly, heterotrimer of A, B and C subunits.

The enzyme catalyses L-glutamyl-tRNA(Gln) + L-glutamine + ATP + H2O = L-glutaminyl-tRNA(Gln) + L-glutamate + ADP + phosphate + H(+). Allows the formation of correctly charged Gln-tRNA(Gln) through the transamidation of misacylated Glu-tRNA(Gln) in organisms which lack glutaminyl-tRNA synthetase. The reaction takes place in the presence of glutamine and ATP through an activated gamma-phospho-Glu-tRNA(Gln). This is Glutamyl-tRNA(Gln) amidotransferase subunit A from Thermus thermophilus (strain ATCC BAA-163 / DSM 7039 / HB27).